The primary structure comprises 54 residues: MDNALLSLTHEQQQAAVEQIQELMAQGVSSGEAIQIIANRLREAHQNNTSENNS.

The protein belongs to the UPF0181 family.

The chain is UPF0181 protein APJL_0874 from Actinobacillus pleuropneumoniae serotype 3 (strain JL03).